Consider the following 289-residue polypeptide: Phosphatidylserine decarboxylase proenzyme (289 aa).

Catalysis depends on charge relay system; for autoendoproteolytic cleavage activity residues Asp89, His146, and Ser252. The active-site Schiff-base intermediate with substrate; via pyruvic acid; for decarboxylase activity is the Ser252. At Ser252 the chain carries Pyruvic acid (Ser); by autocatalysis.

It belongs to the phosphatidylserine decarboxylase family. PSD-B subfamily. Prokaryotic type I sub-subfamily. As to quaternary structure, heterodimer of a large membrane-associated beta subunit and a small pyruvoyl-containing alpha subunit. Requires pyruvate as cofactor. Is synthesized initially as an inactive proenzyme. Formation of the active enzyme involves a self-maturation process in which the active site pyruvoyl group is generated from an internal serine residue via an autocatalytic post-translational modification. Two non-identical subunits are generated from the proenzyme in this reaction, and the pyruvate is formed at the N-terminus of the alpha chain, which is derived from the carboxyl end of the proenzyme. The autoendoproteolytic cleavage occurs by a canonical serine protease mechanism, in which the side chain hydroxyl group of the serine supplies its oxygen atom to form the C-terminus of the beta chain, while the remainder of the serine residue undergoes an oxidative deamination to produce ammonia and the pyruvoyl prosthetic group on the alpha chain. During this reaction, the Ser that is part of the protease active site of the proenzyme becomes the pyruvoyl prosthetic group, which constitutes an essential element of the active site of the mature decarboxylase.

It localises to the cell membrane. It catalyses the reaction a 1,2-diacyl-sn-glycero-3-phospho-L-serine + H(+) = a 1,2-diacyl-sn-glycero-3-phosphoethanolamine + CO2. Its pathway is phospholipid metabolism; phosphatidylethanolamine biosynthesis; phosphatidylethanolamine from CDP-diacylglycerol: step 2/2. Catalyzes the formation of phosphatidylethanolamine (PtdEtn) from phosphatidylserine (PtdSer). This chain is Phosphatidylserine decarboxylase proenzyme, found in Shewanella sp. (strain W3-18-1).